Consider the following 358-residue polypeptide: MTKAYSTRVLTFLILISLMAVTLNLFPTVEAKKRSRDAPIVKGLSWNFYQKACPKVENIIRKELKKVFKRDIGLAAAILRIHFHDCFVQGCEASVLLAGSASGPGEQSSIPNLTLRQQAFVVINNLRALVQKKCGQVVSCSDILALAARDSVVLSGGPDYAVPLGRRDSLAFASQETTLNNLPPPFFNASQLIADFANRNLNITDLVALSGGHTIGIAHCPSFTDRLYPNQDPTMNQFFANSLKRTCPTANSSNTQVNDIRSPDVFDNKYYVDLMNRQGLFTSDQDLFVDKRTRGIVESFAIDQQLFFDYFTVAMIKMGQMSVLTGTQGEIRSNCSARNTQSFMSVLEEGIEEAISMI.

The N-terminal stretch at 1 to 31 (MTKAYSTRVLTFLILISLMAVTLNLFPTVEA) is a signal peptide. 4 disulfide bridges follow: C53–C134, C86–C91, C140–C335, and C220–C247. The Proton acceptor role is filled by H84. Positions 85, 88, 90, 92, and 94 each coordinate Ca(2+). Residue P183 coordinates substrate. N-linked (GlcNAc...) asparagine glycans are attached at residues N188 and N202. Heme b is bound at residue H213. Position 214 (T214) interacts with Ca(2+). Residue N251 is glycosylated (N-linked (GlcNAc...) asparagine). Residues D259, S262, and D267 each contribute to the Ca(2+) site. A glycan (N-linked (GlcNAc...) asparagine) is linked at N334.

This sequence belongs to the peroxidase family. Classical plant (class III) peroxidase subfamily. The cofactor is heme b. It depends on Ca(2+) as a cofactor. In terms of tissue distribution, expressed in roots and leaves.

Its subcellular location is the secreted. It localises to the vacuole. It catalyses the reaction 2 a phenolic donor + H2O2 = 2 a phenolic radical donor + 2 H2O. Its function is as follows. Removal of H(2)O(2), oxidation of toxic reductants, biosynthesis and degradation of lignin, suberization, auxin catabolism, response to environmental stresses such as wounding, pathogen attack and oxidative stress. These functions might be dependent on each isozyme/isoform in each plant tissue. Exhibits a Ca(2+)-pectate binding affinity which could be interpreted in vivo as a specificity to interact with the pectic structure of the cell wall. The sequence is that of Peroxidase 12 (PER12) from Arabidopsis thaliana (Mouse-ear cress).